The following is a 389-amino-acid chain: P2X purinoceptor 4a (389 aa).

Residues 1–36 (MSESVGCCDSVSQCFFDYYTSKILIIRSKKVGTLNR) are Cytoplasmic-facing. The chain crosses the membrane as a helical span at residues 37-57 (FTQALVIAYVIGYVCVYNKGY). Over 58–343 (QDTDTVLSSV…NIIPTLLNMG (286 aa)) the chain is Extracellular. The ATP site is built by Lys70 and Lys72. Positions 70 and 72 each coordinate CTP. Asn78 and Asn113 each carry an N-linked (GlcNAc...) asparagine glycan. Disulfide bonds link Cys119/Cys168, Cys129/Cys152, and Cys135/Cys162. Arg143 lines the CTP pocket. Residue Asn187 is glycosylated (N-linked (GlcNAc...) asparagine). Positions 189 and 191 each coordinate ATP. CTP is bound at residue Thr189. The N-linked (GlcNAc...) asparagine glycan is linked to Asn213. Cystine bridges form between Cys220–Cys230 and Cys264–Cys273. The ATP site is built by Asn296, Arg298, and Lys316. Positions 296, 298, and 316 each coordinate CTP. Residues 344 to 364 (AGLALLGLVNVICDWIVLTFM) traverse the membrane as a helical segment. Residues 365 to 389 (KRKQHYKEQKYTYVDDFGLLHNEDK) are Cytoplasmic-facing.

Belongs to the P2X receptor family. Functional P2XRs are organized as homomeric and heteromeric trimers. Forms homotrimer.

Its subcellular location is the cell membrane. It localises to the lysosome membrane. The catalysed reaction is K(+)(in) = K(+)(out). The enzyme catalyses Na(+)(in) = Na(+)(out). It carries out the reaction Ca(2+)(in) = Ca(2+)(out). With respect to regulation, activated by ATP. pH-dependent and inhibited by acidic pH. Functionally, ATP-gated nonselective transmembrane cation channel permeable to potassium, sodium and calcium. CTP, but not GTP or UTP, functions as a weak affinity agonist for P2RX4. Activated by extracellularly released ATP, it plays multiple role in immunity and central nervous system physiology. Could also function as an ATP-gated cation channel of lysosomal membranes. The protein is P2X purinoceptor 4a (p2rx4a) of Danio rerio (Zebrafish).